The sequence spans 401 residues: Insertion element ISM1 uncharacterized 48.3 kDa protein (401 aa).

This polypeptide is involved in transposition, and should therefore bind to nucleic acids. This chain is Insertion element ISM1 uncharacterized 48.3 kDa protein, found in Methanobrevibacter smithii.